We begin with the raw amino-acid sequence, 303 residues long: N-acetyl-D-glucosamine kinase (303 aa).

Residues 4-11 (GFDVGGTK) and 133-140 (GFGGGLIF) contribute to the ATP site. 4 residues coordinate Zn(2+): His157, Cys177, Cys179, and Cys184.

This sequence belongs to the ROK (NagC/XylR) family. NagK subfamily.

It carries out the reaction N-acetyl-D-glucosamine + ATP = N-acetyl-D-glucosamine 6-phosphate + ADP + H(+). It participates in cell wall biogenesis; peptidoglycan recycling. Its function is as follows. Catalyzes the phosphorylation of N-acetyl-D-glucosamine (GlcNAc) derived from cell-wall degradation, yielding GlcNAc-6-P. The polypeptide is N-acetyl-D-glucosamine kinase (Aliivibrio fischeri (strain ATCC 700601 / ES114) (Vibrio fischeri)).